Reading from the N-terminus, the 151-residue chain is Macrodomain Ter protein (151 aa).

Belongs to the MatP family. As to quaternary structure, homodimer.

It is found in the cytoplasm. In terms of biological role, required for spatial organization of the terminus region of the chromosome (Ter macrodomain) during the cell cycle. Prevents early segregation of duplicated Ter macrodomains during cell division. Binds specifically to matS, which is a 13 bp signature motif repeated within the Ter macrodomain. This is Macrodomain Ter protein from Vibrio atlanticus (strain LGP32) (Vibrio splendidus (strain Mel32)).